The chain runs to 502 residues: Type II secretion system protein E (502 aa).

263–270 (GPTGSGKT) contributes to the ATP binding site. Residues Cys396, Cys399, Cys429, and Cys432 each contribute to the Zn(2+) site. The disordered stretch occupies residues 461–480 (SSEQEMTRHARTSGPSIRDD).

This sequence belongs to the GSP E family. Homodimer. Dimerization is directed by a relatively short domain near the extreme N-terminus and is essential for extracellular protein secretion. May form homooligomers. Interacts with XcpY/GspL. Forms an inner membrane platform subcomplex with XcpS/GspF, XcpY/GspL and XcpZ/GspM. It depends on Zn(2+) as a cofactor.

Its subcellular location is the cell inner membrane. It catalyses the reaction ATP + H2O + cellular proteinSide 1 = ADP + phosphate + cellular proteinSide 2.. In terms of biological role, ATPase component of the type II secretion system required for the energy-dependent secretion of extracellular factors such as proteases and toxins from the periplasm. Acts as a molecular motor to provide the energy that is required for assembly of the pseudopilus and the extrusion of substrates generated in the cytoplasm. The polypeptide is Type II secretion system protein E (xcpR) (Pseudomonas aeruginosa (strain ATCC 15692 / DSM 22644 / CIP 104116 / JCM 14847 / LMG 12228 / 1C / PRS 101 / PAO1)).